The following is a 154-amino-acid chain: Nascent polypeptide-associated complex subunit beta (154 aa).

The NAC-A/B domain maps to 34–99; that stretch reads EQDDTKLIEA…PQEKDVTQLI (66 aa). The interval 125–154 is disordered; it reads KNPELNAGGAEGAEEDIPDLIEGQKFDDVE.

The protein belongs to the NAC-beta family. As to quaternary structure, part of the nascent polypeptide-associated complex (NAC), consisting of EGD2 and EGD1. NAC associates with ribosomes via EGD1.

The protein localises to the cytoplasm. It is found in the nucleus. Its function is as follows. Component of the nascent polypeptide-associated complex (NAC), a dynamic component of the ribosomal exit tunnel, protecting the emerging polypeptides from interaction with other cytoplasmic proteins to ensure appropriate nascent protein targeting. The NAC complex also promotes mitochondrial protein import by enhancing productive ribosome interactions with the outer mitochondrial membrane and blocks the inappropriate interaction of ribosomes translating non-secretory nascent polypeptides with translocation sites in the membrane of the endoplasmic reticulum. EGD1 may act as a transcription factor that exert a negative effect on the expression of several genes that are transcribed by RNA polymerase II. The chain is Nascent polypeptide-associated complex subunit beta (EGD1) from Debaryomyces hansenii (strain ATCC 36239 / CBS 767 / BCRC 21394 / JCM 1990 / NBRC 0083 / IGC 2968) (Yeast).